A 423-amino-acid chain; its full sequence is ATP-dependent Clp protease ATP-binding subunit ClpX (423 aa).

The ClpX-type ZB domain occupies 1 to 50; sequence MTDDTEYRCSFCGKEHHQVDDLIAGPDVRICSECVVLSCEIVEDRRNEAL. Residues cysteine 9, cysteine 12, cysteine 31, and cysteine 34 each contribute to the Zn(2+) site. 126–133 is an ATP binding site; it reads PTGCGKTY.

The protein belongs to the ClpX chaperone family. Component of the ClpX-ClpP complex. Forms a hexameric ring that, in the presence of ATP, binds to fourteen ClpP subunits assembled into a disk-like structure with a central cavity, resembling the structure of eukaryotic proteasomes.

ATP-dependent specificity component of the Clp protease. It directs the protease to specific substrates. Can perform chaperone functions in the absence of ClpP. The protein is ATP-dependent Clp protease ATP-binding subunit ClpX of Tropheryma whipplei (strain Twist) (Whipple's bacillus).